The primary structure comprises 183 residues: Porphobilinogen deaminase (183 aa).

The protein belongs to the HMBS family. Monomer. Dipyrromethane serves as cofactor.

It carries out the reaction 4 porphobilinogen + H2O = hydroxymethylbilane + 4 NH4(+). It participates in porphyrin-containing compound metabolism; protoporphyrin-IX biosynthesis; coproporphyrinogen-III from 5-aminolevulinate: step 2/4. Tetrapolymerization of the monopyrrole PBG into the hydroxymethylbilane pre-uroporphyrinogen in several discrete steps. The protein is Porphobilinogen deaminase (hemC) of Yersinia intermedia.